Reading from the N-terminus, the 255-residue chain is NAD kinase (255 aa).

Aspartate 44 (proton acceptor) is an active-site residue. Residues 44–45 (DG), histidine 49, 114–115 (NE), aspartate 144, alanine 152, 155–160 (SAYNLS), and glutamine 216 contribute to the NAD(+) site.

Belongs to the NAD kinase family. The cofactor is a divalent metal cation.

The protein localises to the cytoplasm. It carries out the reaction NAD(+) + ATP = ADP + NADP(+) + H(+). Functionally, involved in the regulation of the intracellular balance of NAD and NADP, and is a key enzyme in the biosynthesis of NADP. Catalyzes specifically the phosphorylation on 2'-hydroxyl of the adenosine moiety of NAD to yield NADP. This chain is NAD kinase, found in Rickettsia akari (strain Hartford).